A 239-amino-acid chain; its full sequence is O-methyltransferase ankF (239 aa).

S-adenosyl-L-methionine contacts are provided by residues E71, 73–74 (GT), S79, E98, and A127.

It belongs to the class I-like SAM-binding methyltransferase superfamily. Cation-dependent O-methyltransferase family.

It carries out the reaction NK13650 B + S-adenosyl-L-methionine = NK13650 D + S-adenosyl-L-homocysteine + H(+). It participates in secondary metabolite biosynthesis. Functionally, O-methyltransferase; part of the ank cluster that mediates the biosynthesis of NK13650 C, a highly modified cyclo-arginine-tyrosine dipeptide. AnkF converts NK13650 B to produce NK13650 D via methylation of the C-17 phenol group. Within the pathway, the cyclodipeptide synthase ankA acts as the scaffold-generating enzyme and is responsible for formation of the cyclo-Arg-Tyr diketopiperazine (cRY) from L-Arg and L-Tyr. The ankA product cRY is desaturated by the cytochrome P450 monooxygenase ankB to yield a dehydro-cyclodipeptide intermediate. The FAD-dependent monooxygenase ankC then installs the m-OH, ankD catalyzes the attachment of L-homoserine, and ankE ligates citrate to the ankD product to yield NK13650 B. The O-methyltransferase ankF is responsible for methylation of the C-17 phenol group of NK13650 B to produce NK13650 D. Amidation of NK13650 D with L-Asp by ankG then leads to the production of NK13650 C, whereas amidation of NK13650 B produces NK13650 A. The protein is O-methyltransferase ankF of Aspergillus thermomutatus (Neosartorya pseudofischeri).